The chain runs to 335 residues: Glyceraldehyde-3-phosphate dehydrogenase 1 (335 aa).

NAD(+) contacts are provided by residues 12–13 (RI), Asp34, Arg78, and Ser120. Residues 151–153 (SCT) and Thr182 each bind D-glyceraldehyde 3-phosphate. The active-site Nucleophile is Cys152. An NAD(+)-binding site is contributed by Asn183. D-glyceraldehyde 3-phosphate is bound by residues Arg197, 210–211 (TG), and Arg233. Residue Asn315 participates in NAD(+) binding.

Belongs to the glyceraldehyde-3-phosphate dehydrogenase family. In terms of assembly, homotetramer. Interacts with BrxC. In terms of processing, in response to oxidative stress, the active site Cys likely reacts with bacillithiol (BSH) to form mixed disulfides to protect the Cys residue against overoxidation. S-bacillithiolation presumably leads to loss of catalytic activity. Debacillithiolation by monothiol bacilliredoxin BrxC restores the activity.

The protein localises to the cytoplasm. The enzyme catalyses D-glyceraldehyde 3-phosphate + phosphate + NAD(+) = (2R)-3-phospho-glyceroyl phosphate + NADH + H(+). The protein operates within carbohydrate degradation; glycolysis; pyruvate from D-glyceraldehyde 3-phosphate: step 1/5. Its function is as follows. Involved in the glycolysis. Catalyzes the oxidative phosphorylation of glyceraldehyde 3-phosphate (G3P) to 1,3-bisphosphoglycerate (BPG) using the cofactor NAD. The first reaction step involves the formation of a hemiacetal intermediate between G3P and a cysteine residue, and this hemiacetal intermediate is then oxidized to a thioester, with concomitant reduction of NAD to NADH. The reduced NADH is then exchanged with the second NAD, and the thioester is attacked by a nucleophilic inorganic phosphate to produce BPG. The chain is Glyceraldehyde-3-phosphate dehydrogenase 1 from Bacillus subtilis (strain 168).